The primary structure comprises 305 residues: Porphobilinogen deaminase (305 aa).

Residue Cys238 is modified to S-(dipyrrolylmethanemethyl)cysteine.

The protein belongs to the HMBS family. In terms of assembly, monomer. It depends on dipyrromethane as a cofactor.

It carries out the reaction 4 porphobilinogen + H2O = hydroxymethylbilane + 4 NH4(+). It functions in the pathway porphyrin-containing compound metabolism; protoporphyrin-IX biosynthesis; coproporphyrinogen-III from 5-aminolevulinate: step 2/4. Its function is as follows. Tetrapolymerization of the monopyrrole PBG into the hydroxymethylbilane pre-uroporphyrinogen in several discrete steps. The sequence is that of Porphobilinogen deaminase from Rubrobacter xylanophilus (strain DSM 9941 / JCM 11954 / NBRC 16129 / PRD-1).